A 316-amino-acid chain; its full sequence is Phosphate acetyltransferase (316 aa).

Belongs to the phosphate acetyltransferase and butyryltransferase family.

The protein resides in the cytoplasm. It carries out the reaction acetyl-CoA + phosphate = acetyl phosphate + CoA. Its pathway is metabolic intermediate biosynthesis; acetyl-CoA biosynthesis; acetyl-CoA from acetate: step 2/2. The protein is Phosphate acetyltransferase (pta) of Rhizobium meliloti (Ensifer meliloti).